The chain runs to 445 residues: Exodeoxyribonuclease 7 large subunit (445 aa).

Belongs to the XseA family. Heterooligomer composed of large and small subunits.

It is found in the cytoplasm. It carries out the reaction Exonucleolytic cleavage in either 5'- to 3'- or 3'- to 5'-direction to yield nucleoside 5'-phosphates.. Bidirectionally degrades single-stranded DNA into large acid-insoluble oligonucleotides, which are then degraded further into small acid-soluble oligonucleotides. This chain is Exodeoxyribonuclease 7 large subunit, found in Nautilia profundicola (strain ATCC BAA-1463 / DSM 18972 / AmH).